Here is a 186-residue protein sequence, read N- to C-terminus: ATP synthase subunit b (186 aa).

The chain crosses the membrane as a helical span at residues 5-25 (LILNLLVLLAPAAVFAAGGGH).

This sequence belongs to the ATPase B chain family. As to quaternary structure, F-type ATPases have 2 components, F(1) - the catalytic core - and F(0) - the membrane proton channel. F(1) has five subunits: alpha(3), beta(3), gamma(1), delta(1), epsilon(1). F(0) has three main subunits: a(1), b(2) and c(10-14). The alpha and beta chains form an alternating ring which encloses part of the gamma chain. F(1) is attached to F(0) by a central stalk formed by the gamma and epsilon chains, while a peripheral stalk is formed by the delta and b chains.

It localises to the cell inner membrane. F(1)F(0) ATP synthase produces ATP from ADP in the presence of a proton or sodium gradient. F-type ATPases consist of two structural domains, F(1) containing the extramembraneous catalytic core and F(0) containing the membrane proton channel, linked together by a central stalk and a peripheral stalk. During catalysis, ATP synthesis in the catalytic domain of F(1) is coupled via a rotary mechanism of the central stalk subunits to proton translocation. In terms of biological role, component of the F(0) channel, it forms part of the peripheral stalk, linking F(1) to F(0). In Bdellovibrio bacteriovorus (strain ATCC 15356 / DSM 50701 / NCIMB 9529 / HD100), this protein is ATP synthase subunit b.